Reading from the N-terminus, the 112-residue chain is MQQLVEQLNAQIPLEGYLTVAAIMFAIGAWGALIRRNAVVVFMCVELMINAVNLTLVAFADFLPGAGGAGAGYTVLIIAIAAAEVAVGLAIVLAIFRTRRTVNIDEVDSLRG.

Transmembrane regions (helical) follow at residues 14 to 34 (LEGY…GALI), 39 to 59 (VVVF…LVAF), and 76 to 96 (LIIA…LAIF).

It belongs to the complex I subunit 4L family. As to quaternary structure, NDH-1 is composed of 14 different subunits. Subunits NuoA, H, J, K, L, M, N constitute the membrane sector of the complex.

The protein localises to the cell membrane. The enzyme catalyses a quinone + NADH + 5 H(+)(in) = a quinol + NAD(+) + 4 H(+)(out). Its function is as follows. NDH-1 shuttles electrons from NADH, via FMN and iron-sulfur (Fe-S) centers, to quinones in the respiratory chain. The immediate electron acceptor for the enzyme in this species is believed to be a menaquinone. Couples the redox reaction to proton translocation (for every two electrons transferred, four hydrogen ions are translocated across the cytoplasmic membrane), and thus conserves the redox energy in a proton gradient. This chain is NADH-quinone oxidoreductase subunit K, found in Rubrobacter xylanophilus (strain DSM 9941 / JCM 11954 / NBRC 16129 / PRD-1).